A 356-amino-acid chain; its full sequence is Guanine nucleotide-binding protein alpha-15 subunit (356 aa).

A lipid anchor (N-myristoyl glycine) is attached at Gly2. The S-palmitoyl cysteine moiety is linked to residue Cys5. The G-alpha domain maps to 33–356 (GNQKLLLLGT…GRNLRGTGME (324 aa)). Positions 36–49 (KLLLLGTGECGKST) are G1 motif. GTP-binding positions include 41–48 (GTGECGKS), 177–183 (LRIRIPT), 202–206 (DVGGQ), 271–274 (NKRD), and Ala328. Mg(2+)-binding residues include Ser48 and Thr183. Positions 175-183 (DMLRIRIPT) are G2 motif. Residues 198–207 (FRIFDVGGQR) are G3 motif. The tract at residues 267 to 274 (ILFLNKRD) is G4 motif. The interval 326 to 331 (TCATDT) is G5 motif.

It belongs to the G-alpha family. As to quaternary structure, g proteins are composed of 3 units; alpha, beta and gamma. The alpha chain contains the guanine nucleotide binding site.

In terms of biological role, guanine nucleotide-binding proteins (G proteins) are involved as modulators or transducers in various transmembrane signaling systems. In Caenorhabditis briggsae, this protein is Guanine nucleotide-binding protein alpha-15 subunit (gpa-15).